The primary structure comprises 406 residues: UPF0754 membrane protein CYA_0973 (406 aa).

Helical transmembrane passes span 1-21 (MALWIYVVPPLAGLVIGYFTN) and 385-405 (IVNLGGLLGFLVGCVQVLFLL).

Belongs to the UPF0754 family.

Its subcellular location is the cell inner membrane. In Synechococcus sp. (strain JA-3-3Ab) (Cyanobacteria bacterium Yellowstone A-Prime), this protein is UPF0754 membrane protein CYA_0973.